The primary structure comprises 129 residues: UPF0102 protein Mrad2831_2938 (129 aa).

It belongs to the UPF0102 family.

This is UPF0102 protein Mrad2831_2938 from Methylobacterium radiotolerans (strain ATCC 27329 / DSM 1819 / JCM 2831 / NBRC 15690 / NCIMB 10815 / 0-1).